The primary structure comprises 356 residues: MQTLHALLRDIPAPDAEAMARAQQHIDGLLKPPGSLGRLETLAVQLAGMPGLNGTPQVGEKAVLVMCADHGVWDEGVAVSPKIVTAIQAANMTQGTTGVCVLAAQAGAKVHVIDVGIDAEPIPGVVDMRVARGCGNIAVGPAMSRSQAEALLLEVSRYTCDLAKRGVTLFGVGELGMANTTPAAAMVSVFTGSDAKEVVGIGANLPPSRIDNKVDVVRRAIAINQPNPRDGIDVLSKVGGFDLVGMTGVMLGAARCGLPVLLDGFLSYSAALAACQIAPAVRPYLIPSHFSAEKGARIALAHLSMEPYLHMAMRLGEGSGAALAMPIVEAACAMFHNMGELAASNIVLPEGNANAT.

The active-site Proton acceptor is Glu317.

This sequence belongs to the CobT family. In terms of assembly, homodimer.

The enzyme catalyses 5,6-dimethylbenzimidazole + nicotinate beta-D-ribonucleotide = alpha-ribazole 5'-phosphate + nicotinate + H(+). Its pathway is nucleoside biosynthesis; alpha-ribazole biosynthesis; alpha-ribazole from 5,6-dimethylbenzimidazole: step 1/2. Catalyzes the synthesis of alpha-ribazole-5'-phosphate from nicotinate mononucleotide (NAMN) and 5,6-dimethylbenzimidazole (DMB). The sequence is that of Nicotinate-nucleotide--dimethylbenzimidazole phosphoribosyltransferase from Salmonella paratyphi A (strain AKU_12601).